A 332-amino-acid chain; its full sequence is D-lactate dehydrogenase (332 aa).

Residues 155 to 156, Asp-175, 206 to 207, Asn-212, and 233 to 235 contribute to the NAD(+) site; these read RI, VP, and FAR. Residues Arg-235 and Glu-264 contribute to the active site. Residue His-296 is the Proton donor of the active site.

Belongs to the D-isomer specific 2-hydroxyacid dehydrogenase family. Homodimer.

The enzyme catalyses (R)-lactate + NAD(+) = pyruvate + NADH + H(+). The polypeptide is D-lactate dehydrogenase (Lactiplantibacillus pentosus (Lactobacillus pentosus)).